The sequence spans 214 residues: Orotate phosphoribosyltransferase (214 aa).

Position 26 (Lys26) interacts with 5-phospho-alpha-D-ribose 1-diphosphate. Position 34–35 (34–35 (FF)) interacts with orotate. 5-phospho-alpha-D-ribose 1-diphosphate-binding positions include 72-73 (YK), Arg99, Lys100, Lys103, His105, and 124-132 (DDVITAGTA). 2 residues coordinate orotate: Thr128 and Arg156.

Belongs to the purine/pyrimidine phosphoribosyltransferase family. PyrE subfamily. As to quaternary structure, homodimer. Mg(2+) serves as cofactor.

The enzyme catalyses orotidine 5'-phosphate + diphosphate = orotate + 5-phospho-alpha-D-ribose 1-diphosphate. The protein operates within pyrimidine metabolism; UMP biosynthesis via de novo pathway; UMP from orotate: step 1/2. In terms of biological role, catalyzes the transfer of a ribosyl phosphate group from 5-phosphoribose 1-diphosphate to orotate, leading to the formation of orotidine monophosphate (OMP). The protein is Orotate phosphoribosyltransferase of Pasteurella multocida (strain Pm70).